Consider the following 346-residue polypeptide: MTTVLGIETSCDETAVAIVNNRRICSSVVASQIDLHKRYGGVVPEEASRQHLLTINPCIEQALQTAKLTWNDIDGIAATVAPGLIGALMVGETAAKTLAMIHHKPFLGIHHLEGHIYATYLSEPDWKPPFLCLLVSGGHTSLIHVKDCGVYEQLGTTRDDAAGEAFDKVARLLNLGYPGGPIIDQLATQGNPKRFNLPEGKVSLPQGGYHPYDSSFSGLKTAVLRLVEKLKQEKTEPLPIADLAASFQETVARSLTKKTITCALDHHISHIAVGGGVAANSGLRNHLQEAAKKRNLTVHFPPLKLCTDNAAMIACAACDHLKKGHISSWNLGVQSRLPITEVMTLY.

Fe cation is bound by residues His111 and His115. Residues 134–138, Asp167, Gly180, Asp184, and Asn280 each bind substrate; that span reads LVSGG. Asp308 lines the Fe cation pocket.

Belongs to the KAE1 / TsaD family. It depends on Fe(2+) as a cofactor.

It is found in the cytoplasm. The catalysed reaction is L-threonylcarbamoyladenylate + adenosine(37) in tRNA = N(6)-L-threonylcarbamoyladenosine(37) in tRNA + AMP + H(+). Its function is as follows. Required for the formation of a threonylcarbamoyl group on adenosine at position 37 (t(6)A37) in tRNAs that read codons beginning with adenine. Is involved in the transfer of the threonylcarbamoyl moiety of threonylcarbamoyl-AMP (TC-AMP) to the N6 group of A37, together with TsaE and TsaB. TsaD likely plays a direct catalytic role in this reaction. This chain is tRNA N6-adenosine threonylcarbamoyltransferase, found in Crocosphaera subtropica (strain ATCC 51142 / BH68) (Cyanothece sp. (strain ATCC 51142)).